The sequence spans 401 residues: MDRRVVITGMGGLCGLGTDTTSIWKWSARRRSAIGPVLNTELHGLKGIVGAEIKALPDHNIDRKQLVSMDRISVLAVIAAHEAMRQAGLSCNEGNALRFGATVGVGLGGWDATEKAYRPSLSTGGRTEIFTGVKAMPSAAACQVSMSLGLRGPVFGVTSACSSANHAIASAVDQIKCGRADVMLAGGSDAPLVWIVLKAWEAMRALAPDTCRPFSAGRKGVVLGEGAGMAVLESYEHATARGATILAEVAGVGLSADAFHITAPAVHGPESAMRACLADAGLNAEDVDYLNAHGTGTKANDQNETTAIKRVFGDHAYSMSISSTKSTHAHCIGAASALEMIACVMAIQEGVVPPTANYREPDPDCDLDVTPNVPRERKVRVAMSNAFAMGGTNAVLAFKQV.

Positions 2-400 (DRRVVITGMG…GTNAVLAFKQ (399 aa)) constitute a Ketosynthase family 3 (KS3) domain. Catalysis depends on for beta-ketoacyl synthase activity residues Cys161, His293, and His330. A helical membrane pass occupies residues 328-347 (HAHCIGAASALEMIACVMAI).

This sequence belongs to the thiolase-like superfamily. Beta-ketoacyl-ACP synthases family.

The protein localises to the cell inner membrane. Its function is as follows. Proposed to synthesize NOD factor fatty acyl chain. Involved in the synthesis of a highly unsaturated fatty acid moiety, which forms part of a lipo-oligosaccharide that is responsible for host specificity. This Rhizobium meliloti (Ensifer meliloti) protein is Nodulation protein E (nodE).